A 426-amino-acid polypeptide reads, in one-letter code: MWPLTALLLLVPSSGQAATLEKPILSLHPPWTTIFKGERVTLKCDGYHPLLLELQPISTLWYLGHLLLPSHKKSIEVQTPGVYRCQTRGAPVSDPIHLSVSNDWLILQVPYAPVFEGEPLVLRCRGWYDKVVYKLHYYHDGQAVRYFHSSANYTVLQARASDSGRYQCSGTMRIPVESAPMFSAKVAVTVQELFRAPVLRVMGPREARGAALGGVVLRCDTRLHPQKRDTPLQFAFYKYSRAVRRFDWGAEYTVPEPEVEELESYWCEAATATRSVRKRSPWLQLPGPGSPLDPASTTAPAPWAAALAPGNRPLSFRKPPVSRSVPLVTSVRNTTSTGLQFPASGAPTAGPPACAPPTPLEQSAGALKPDVDLLLREMQLLKGLLSRVVLELKEPQALRELRGTPETPTSHFAVSPGTPETTPVES.

Residues 1 to 17 form the signal peptide; it reads MWPLTALLLLVPSSGQA. Ig-like C2-type domains follow at residues 23-101 and 103-189; these read PILS…LSVS and DWLI…VAVT. Cystine bridges form between Cys-44/Cys-85 and Cys-124/Cys-168. N-linked (GlcNAc...) asparagine glycosylation occurs at Asn-152. Residues 400–426 are disordered; it reads ELRGTPETPTSHFAVSPGTPETTPVES. The span at 406–426 shows a compositional bias: polar residues; the sequence is ETPTSHFAVSPGTPETTPVES.

Expressed at low levels. Expressed in B-lymphocytes. Detected in tonsil, lung, kidney, spleen and placenta. Expressed by a small subset of germinal center B-cells in tonsils and by melanocytes (at protein level).

The protein resides in the cytoplasm. It is found in the endoplasmic reticulum. The sequence is that of Fc receptor-like B (FCRLB) from Homo sapiens (Human).